The sequence spans 396 residues: Tail sheath protein (396 aa).

This sequence belongs to the myoviridae tail sheath protein family. Homomultimer.

It is found in the virion. Its subcellular location is the host cytoplasm. Polymerizes as an extended helical structure around the baseplate-tail tube complex. During ejection, the sheath shifts to a contracted form, thereby making the inner tail tube protrude through the host cell envelope. The protein is Tail sheath protein (FI) of Enterobacteriaceae (Bacteriophage P2).